A 335-amino-acid chain; its full sequence is Methylthioribose-1-phosphate isomerase (335 aa).

Substrate is bound by residues 43 to 45 (RGA), Arg86, and Gln193. Asp234 serves as the catalytic Proton donor. Substrate is bound at residue 244-245 (NK).

Belongs to the eIF-2B alpha/beta/delta subunits family. MtnA subfamily.

The enzyme catalyses 5-(methylsulfanyl)-alpha-D-ribose 1-phosphate = 5-(methylsulfanyl)-D-ribulose 1-phosphate. The protein operates within amino-acid biosynthesis; L-methionine biosynthesis via salvage pathway; L-methionine from S-methyl-5-thio-alpha-D-ribose 1-phosphate: step 1/6. In terms of biological role, catalyzes the interconversion of methylthioribose-1-phosphate (MTR-1-P) into methylthioribulose-1-phosphate (MTRu-1-P). The chain is Methylthioribose-1-phosphate isomerase from Parabacteroides distasonis (strain ATCC 8503 / DSM 20701 / CIP 104284 / JCM 5825 / NCTC 11152).